Here is a 178-residue protein sequence, read N- to C-terminus: Large ribosomal subunit protein uL6 (178 aa).

This sequence belongs to the universal ribosomal protein uL6 family. As to quaternary structure, part of the 50S ribosomal subunit.

Functionally, this protein binds to the 23S rRNA, and is important in its secondary structure. It is located near the subunit interface in the base of the L7/L12 stalk, and near the tRNA binding site of the peptidyltransferase center. The polypeptide is Large ribosomal subunit protein uL6 (Symbiobacterium thermophilum (strain DSM 24528 / JCM 14929 / IAM 14863 / T)).